We begin with the raw amino-acid sequence, 336 residues long: 3-hydroxyisobutyrate dehydrogenase, mitochondrial (336 aa).

A mitochondrion-targeting transit peptide spans 1-36 (MAASLRLLGAASGLRYWSRRLRPAAGSFAAVCSRSV). 40–68 (TPVGFIGLGNMGNPMAKNLMKHGYPLIIY) contacts NAD(+). N6-acetyllysine; alternate is present on residues K60 and K76. 2 positions are modified to N6-succinyllysine; alternate: K60 and K76. K95 carries the N6-succinyllysine modification. Residues 103-104 (LP) and N108 each bind NAD(+). At K121 the chain carries N6-acetyllysine. Residue T134 coordinates NAD(+). K141 is modified (N6-succinyllysine). Residue K145 is modified to N6-acetyllysine. K149 is modified (N6-acetyllysine; alternate). K149 carries the post-translational modification N6-succinyllysine; alternate. Residue K209 is part of the active site. N6-acetyllysine; alternate is present on residues K238 and K242. N6-succinyllysine; alternate occurs at positions 238 and 242. An NAD(+)-binding site is contributed by K284. K297 carries the post-translational modification N6-succinyllysine. K321 is modified (N6-acetyllysine; alternate). Residue K321 is modified to N6-succinyllysine; alternate.

This sequence belongs to the HIBADH-related family. 3-hydroxyisobutyrate dehydrogenase subfamily. In terms of assembly, homodimer. Detected in skin fibroblasts.

The protein resides in the mitochondrion. It catalyses the reaction 3-hydroxy-2-methylpropanoate + NAD(+) = 2-methyl-3-oxopropanoate + NADH + H(+). Its pathway is amino-acid degradation; L-valine degradation. The sequence is that of 3-hydroxyisobutyrate dehydrogenase, mitochondrial (HIBADH) from Homo sapiens (Human).